Consider the following 589-residue polypeptide: ATP-dependent lipid A-core flippase (589 aa).

5 consecutive transmembrane segments (helical) span residues 29–49, 70–90, 157–177, 261–281, and 283–303; these read LLLV…TGFL, WLPV…YITD, VIGA…TILV, MIGA…ALAG, and LTAG…PGLK. The ABC transmembrane type-1 domain maps to 32–314; that stretch reads VAALIAALIE…LTNVQNMVQR (283 aa). An ABC transporter domain is found at 346–582; the sequence is IEFRDVTARY…GGLYSHLHGM (237 aa). An ATP-binding site is contributed by 380 to 387; it reads GRSGSGKS.

Belongs to the ABC transporter superfamily. Lipid exporter (TC 3.A.1.106) family. Homodimer.

It localises to the cell inner membrane. It carries out the reaction ATP + H2O + lipid A-core oligosaccharideSide 1 = ADP + phosphate + lipid A-core oligosaccharideSide 2.. In terms of biological role, involved in lipopolysaccharide (LPS) biosynthesis. Translocates lipid A-core from the inner to the outer leaflet of the inner membrane. Transmembrane domains (TMD) form a pore in the inner membrane and the ATP-binding domain (NBD) is responsible for energy generation. This Xanthomonas campestris pv. campestris (strain 8004) protein is ATP-dependent lipid A-core flippase.